The following is a 205-amino-acid chain: MAQLYFYYSAMNAGKSTALLQSSYNYQERGMRTVVYTAEIDDRFGAGKVSSRIGLSSPAKLFNQNSSLFAEIRAEHEQQAIHCVLVDECQFLTRQQVYELSEVVDQLDIPVLCYGLRTDFRGELFIGSQYLLAWSDKLVELKTICFCGRKASMVLRLDQAGRPYNEGEQVVIGGNERYVSVCRKHYKEALEVGSLTAIQERHRHD.

ATP contacts are provided by residues 9–16 and 87–90; these read SAMNAGKS and DECQ. Residue glutamate 88 is the Proton acceptor of the active site. Residues cysteine 145, cysteine 147, cysteine 182, and histidine 185 each coordinate Zn(2+).

Belongs to the thymidine kinase family. As to quaternary structure, homotetramer.

The protein resides in the cytoplasm. The catalysed reaction is thymidine + ATP = dTMP + ADP + H(+). This Shigella dysenteriae serotype 1 (strain Sd197) protein is Thymidine kinase.